The chain runs to 545 residues: Resolvase homolog YokA (545 aa).

The Resolvase/invertase-type recombinase catalytic domain occupies 14–165 (NILGYLRRSR…GAKYTYAAQG (152 aa)). Residues 19 to 46 (LRRSRQDMEREKRTGEDTLTEQKELMNK) adopt a coiled-coil conformation. The O-(5'-phospho-DNA)-serine intermediate role is filled by Ser22. The segment at residues 173–303 (PYGYQLNKKT…VKIANKVPLL (131 aa)) is a DNA-binding region (recombinase). A coiled-coil region spans residues 402–475 (NMKTKKQMSE…QDTQSEIDSN (74 aa)).

In the N-terminal section; belongs to the site-specific recombinase resolvase family.

The sequence is that of Resolvase homolog YokA (yokA) from Bacillus subtilis (strain 168).